The following is a 341-amino-acid chain: HTH-type transcriptional repressor PurR (341 aa).

One can recognise an HTH lacI-type domain in the interval 2 to 56 (ATIKDVAKRAGVSTTTVSHVINKTRFVAENTRAAVWAAIKELNYSPSAVARSLKV). The segment at residues 4 to 23 (IKDVAKRAGVSTTTVSHVIN) is a DNA-binding region (H-T-H motif). The DNA-binding element occupies 48-56 (SAVARSLKV). Hypoxanthine is bound by residues Y73, R190, T192, F221, and D275.

In terms of assembly, homodimer.

It participates in purine metabolism; purine nucleotide biosynthesis [regulation]. Is the main repressor of the genes involved in the de novo synthesis of purine nucleotides, regulating purB, purC, purEK, purF, purHD, purL, purMN and guaBA expression. PurR is allosterically activated to bind its cognate DNA by binding the purine corepressors, hypoxanthine or guanine, thereby effecting transcription repression. The polypeptide is HTH-type transcriptional repressor PurR (Proteus mirabilis (strain HI4320)).